Reading from the N-terminus, the 277-residue chain is Large ribosomal subunit protein uL2 (277 aa).

Disordered regions lie at residues 24–55 (ITTS…RHHG) and 221–277 (RGSV…RKKK).

This sequence belongs to the universal ribosomal protein uL2 family. As to quaternary structure, part of the 50S ribosomal subunit. Forms a bridge to the 30S subunit in the 70S ribosome.

One of the primary rRNA binding proteins. Required for association of the 30S and 50S subunits to form the 70S ribosome, for tRNA binding and peptide bond formation. It has been suggested to have peptidyltransferase activity; this is somewhat controversial. Makes several contacts with the 16S rRNA in the 70S ribosome. In Listeria welshimeri serovar 6b (strain ATCC 35897 / DSM 20650 / CCUG 15529 / CIP 8149 / NCTC 11857 / SLCC 5334 / V8), this protein is Large ribosomal subunit protein uL2.